The chain runs to 383 residues: Trihelix transcription factor ASIL1 (383 aa).

4 disordered regions span residues 1–32 (MEDD…LPTN), 61–94 (HTPS…DDCW), 189–295 (IASS…SGVG), and 346–383 (EITQ…NVSS). Residues 66 to 88 (TGGGGSGNRNGRGGGGGSGGGGG) are compositionally biased toward gly residues. A Myb-like domain is found at 94 to 153 (WSEEATKVLIEAWGDRFSEPGKGTLKQQHWKEVAEIVNKSRQCKYPKTDIQCKNRIDTVK). The span at 206-225 (NSRSSMFKRQTKGNQIVQQQ) shows a compositional bias: polar residues. Basic and acidic residues predominate over residues 226-235 (QEKRGSDSMR). Positions 228–241 (KRGSDSMRWHFRKR) match the Bipartite nuclear localization signal motif. Residues 246-262 (TESESDPEPEASPEESA) show a composition bias toward acidic residues. The segment covering 263–274 (ESLPPLQPIQPL) has biased composition (low complexity). The stretch at 304 to 365 (FTEAYEKAET…ERSRQRGERR (62 aa)) forms a coiled coil. Positions 356–367 (ERSRQRGERRIV) are enriched in basic and acidic residues.

The protein resides in the nucleus. In terms of biological role, transcription repressor that binds specific DNA sequence such as the GT-box-like motif 5'-CGTGATT-3' in the AT2S3 promoter. Negative regulator of seed maturation genes during seed germination and seedling development. May target GT-box-containing embryonic genes by competing with the binding of transcriptional activators to this promoter region. Contributes to the maintenance and control of seed filling and may repress the maturation program during early embryogenesis. This chain is Trihelix transcription factor ASIL1, found in Arabidopsis thaliana (Mouse-ear cress).